The sequence spans 276 residues: Large ribosomal subunit protein uL2 (276 aa).

The disordered stretch occupies residues 223–276; it reads AVMNPVDHPHGGGEGKNSVGRKSPLTPWGKPALGIKTRGRKTSDKFIVRRRNEK. Basic and acidic residues predominate over residues 263-276; sequence KTSDKFIVRRRNEK.

Belongs to the universal ribosomal protein uL2 family. Part of the 50S ribosomal subunit. Forms a bridge to the 30S subunit in the 70S ribosome.

Its function is as follows. One of the primary rRNA binding proteins. Required for association of the 30S and 50S subunits to form the 70S ribosome, for tRNA binding and peptide bond formation. It has been suggested to have peptidyltransferase activity; this is somewhat controversial. Makes several contacts with the 16S rRNA in the 70S ribosome. This is Large ribosomal subunit protein uL2 from Fusobacterium nucleatum subsp. nucleatum (strain ATCC 25586 / DSM 15643 / BCRC 10681 / CIP 101130 / JCM 8532 / KCTC 2640 / LMG 13131 / VPI 4355).